Here is an 87-residue protein sequence, read N- to C-terminus: DNA polymerase epsilon subunit C (87 aa).

As to quaternary structure, DNA polymerase epsilon is a heterotetramer consisting of cdc20/Pol2, dpb2, dpb3, and dpb4. Also forms a heterodimer consisting dpb3 and dpb4. Interacts directly with cdc20/pol2 and dpb4.

The protein localises to the nucleus. Functionally, as accessory component of the DNA polymerase epsilon (DNA polymerase II) participates in chromosomal DNA replication. It is required during synthesis of the leading and lagging DNA strands at the replication fork and binds at/or near replication origins and moves along DNA with the replication fork. It has 3'-5' proofreading exonuclease activity that correct errors arising during DNA replication. It is also involved in DNA synthesis during DNA repair. The dpb3-dpb4 dimer associates with histone deacetylases, chromatin remodelers, and histones and plays a crucial role in the inheritance of histone hypoacetylation and H3K9 methylation in heterochromatin. The dpb3-dpb4 dimer is also required for the recruitment of sir2 to heterochromatin. This is DNA polymerase epsilon subunit C from Schizosaccharomyces pombe (strain 972 / ATCC 24843) (Fission yeast).